The following is a 672-amino-acid chain: MRTALLEVGLEELPASEFHSILKQLEERSTELLKAYRISSGSAEVFVGSRRFGVILKNLPERQEDFTEEKKGPPLNVAYDENGKPTKALEGFLRNNNASLENVVHREGYIYLSRVVEGKPVEEVLPDLFRDLVLGLNFRKPMRWGSGEHEYIRPVHWIVAMVDGRVLDLEIFGLRSSRISYGKRYHAGSIKIPDPERYYESLKKGFVISSHLERKKFVLEQIDEFEKRSGMKIERDEELIEEIVAITEYPRIVVGQFDRKYLELPEEIIVTAVKHHQRSFIAHKETLTNTFVAFQDGPQPPENVVKGYERVINARLEDARYYFQKDLETPLEKMNEKLKEIVFQEKLGTLYDKVERIKKISERLCEDLKLPESFTQKVLEAASICKADIASKVVYEFPELQGVMGRIYALREGINEEIATAIEDHYSEEPQTVIGSILGIADRIDTIVGNFAIGNVPTSSKDPYGLKNKADAIFRIIRKNEWDISLEELLTFASSLVGYRLSEELETFFAGRFYQFLVNELGISFDVARAVNHLWKRPLRGILSAEALQEISEKPEFQDLFVGFERVHNITKNHDSVRFDGALFEKEEEKKLMNKFYEVKEKVLKALERLNYREALQYLIELKPYIDEYFDNVFVMVKRDDLRVNRLGFLKNIDELFMMVGDMTYLVKRSQV.

It belongs to the class-II aminoacyl-tRNA synthetase family. Tetramer of two alpha and two beta subunits.

The protein resides in the cytoplasm. The catalysed reaction is tRNA(Gly) + glycine + ATP = glycyl-tRNA(Gly) + AMP + diphosphate. The polypeptide is Glycine--tRNA ligase beta subunit (Thermotoga petrophila (strain ATCC BAA-488 / DSM 13995 / JCM 10881 / RKU-1)).